The chain runs to 423 residues: Tubulin beta-2 chain (423 aa).

Residues Glu-44, Ser-113, Gly-117, Thr-118, Gly-119, Asn-179, and Asn-201 each coordinate GTP. A Mg(2+)-binding site is contributed by Glu-44. A disordered region spans residues 394 to 423 (VSEYQQYQDATAEEEGEYDEDEDDEGGDYA). The span at 404–423 (TAEEEGEYDEDEDDEGGDYA) shows a compositional bias: acidic residues.

Belongs to the tubulin family. In terms of assembly, dimer of alpha and beta chains. A typical microtubule is a hollow water-filled tube with an outer diameter of 25 nm and an inner diameter of 15 nM. Alpha-beta heterodimers associate head-to-tail to form protofilaments running lengthwise along the microtubule wall with the beta-tubulin subunit facing the microtubule plus end conferring a structural polarity. Microtubules usually have 13 protofilaments but different protofilament numbers can be found in some organisms and specialized cells. Requires Mg(2+) as cofactor.

The protein resides in the cytoplasm. The protein localises to the cytoskeleton. In terms of biological role, tubulin is the major constituent of microtubules, a cylinder consisting of laterally associated linear protofilaments composed of alpha- and beta-tubulin heterodimers. Microtubules grow by the addition of GTP-tubulin dimers to the microtubule end, where a stabilizing cap forms. Below the cap, tubulin dimers are in GDP-bound state, owing to GTPase activity of alpha-tubulin. The sequence is that of Tubulin beta-2 chain (TUBB2) from Oomycete-like sp. (strain MacKay2000).